A 207-amino-acid polypeptide reads, in one-letter code: Large ribosomal subunit protein uL4 (207 aa).

The interval 49-78 (HAVKNRSAVSGGGRKPWRQKGTGRARQGSI) is disordered.

Belongs to the universal ribosomal protein uL4 family. As to quaternary structure, part of the 50S ribosomal subunit.

One of the primary rRNA binding proteins, this protein initially binds near the 5'-end of the 23S rRNA. It is important during the early stages of 50S assembly. It makes multiple contacts with different domains of the 23S rRNA in the assembled 50S subunit and ribosome. Its function is as follows. Forms part of the polypeptide exit tunnel. The chain is Large ribosomal subunit protein uL4 from Streptococcus pneumoniae serotype 19F (strain G54).